We begin with the raw amino-acid sequence, 429 residues long: Tol-Pal system protein TolB (429 aa).

The first 22 residues, 1–22 (MTRRLFILITIMLCLIPALLHS), serve as a signal peptide directing secretion. Disordered regions lie at residues 362–383 (PDGT…RWSP) and 407–429 (GSGQ…SPRW). Over residues 363–374 (DGTNDTRLTSEG) the composition is skewed to polar residues.

This sequence belongs to the TolB family. As to quaternary structure, the Tol-Pal system is composed of five core proteins: the inner membrane proteins TolA, TolQ and TolR, the periplasmic protein TolB and the outer membrane protein Pal. They form a network linking the inner and outer membranes and the peptidoglycan layer.

The protein resides in the periplasm. Its function is as follows. Part of the Tol-Pal system, which plays a role in outer membrane invagination during cell division and is important for maintaining outer membrane integrity. The chain is Tol-Pal system protein TolB from Geobacter metallireducens (strain ATCC 53774 / DSM 7210 / GS-15).